Reading from the N-terminus, the 236-residue chain is Large ribosomal subunit protein uL1 (236 aa).

It belongs to the universal ribosomal protein uL1 family. In terms of assembly, part of the 50S ribosomal subunit.

Functionally, binds directly to 23S rRNA. The L1 stalk is quite mobile in the ribosome, and is involved in E site tRNA release. Its function is as follows. Protein L1 is also a translational repressor protein, it controls the translation of the L11 operon by binding to its mRNA. The polypeptide is Large ribosomal subunit protein uL1 (Kocuria rhizophila (strain ATCC 9341 / DSM 348 / NBRC 103217 / DC2201)).